Here is a 173-residue protein sequence, read N- to C-terminus: MAETTVEQPVEETEVVDIESYTTESEVPVEGEYTSESVASRFGEPQPAAGLGRRKNAIARVRIVPGTGKWKINGRTLEDYFPNKVHQQEVNEPFKVLELEGRYDVIARISGGGVSGQAGALRLGVARALNEADVDNNRGALKKAGFLKRDDRAVERKKAGLKKARKAPQYSKR.

The tract at residues 20–53 (SYTTESEVPVEGEYTSESVASRFGEPQPAAGLGR) is disordered.

This sequence belongs to the universal ribosomal protein uS9 family.

The sequence is that of Small ribosomal subunit protein uS9 from Streptomyces avermitilis (strain ATCC 31267 / DSM 46492 / JCM 5070 / NBRC 14893 / NCIMB 12804 / NRRL 8165 / MA-4680).